The sequence spans 316 residues: BTB/POZ domain-containing adapter for CUL3-mediated RhoA degradation protein 2 (316 aa).

The region spanning Lys-28 to Gln-96 is the BTB domain. Over residues Glu-268–Pro-279 the composition is skewed to polar residues. The segment at Glu-268–Glu-287 is disordered. Phosphoserine is present on Ser-278. The residue at position 280 (Ser-280) is a Phosphoserine; by CK2.

This sequence belongs to the BACURD family. Component of the BCR(TNFAIP1) E3 ubiquitin ligase complex, at least composed of CUL3, TNFAIP1/BACURD2 and RBX1. Interacts with RHOA; with a preference for RhoA-GDP. Interacts with RHOB. Interacts with CSNK2B. Interacts with PCNA. Post-translationally, phosphorylation at Ser-280 by CK2 facilitates the nucleus localization and increases interaction with PCNA.

Its subcellular location is the cytoplasm. It localises to the nucleus. The protein localises to the endosome. The protein operates within protein modification; protein ubiquitination. Its function is as follows. Substrate-specific adapter of a BCR (BTB-CUL3-RBX1) E3 ubiquitin-protein ligase complex involved in regulation of cytoskeleton structure. The BCR(TNFAIP1) E3 ubiquitin ligase complex mediates the ubiquitination of RHOA, leading to its degradation by the proteasome, thereby regulating the actin cytoskeleton and cell migration. Its interaction with RHOB may regulate apoptosis. May enhance the PCNA-dependent DNA polymerase delta activity. The chain is BTB/POZ domain-containing adapter for CUL3-mediated RhoA degradation protein 2 (Tnfaip1) from Rattus norvegicus (Rat).